The following is a 223-amino-acid chain: Type III pantothenate kinase (223 aa).

Position 17–24 (17–24 (DIGNTHIH)) interacts with ATP. Residues tyrosine 81 and 85–88 (GIDR) contribute to the substrate site. Residue aspartate 87 is the Proton acceptor of the active site. A K(+)-binding site is contributed by aspartate 102. Serine 105 is an ATP binding site. Residue threonine 157 coordinates substrate.

This sequence belongs to the type III pantothenate kinase family. As to quaternary structure, homodimer. The cofactor is NH4(+). K(+) is required as a cofactor.

It is found in the cytoplasm. The catalysed reaction is (R)-pantothenate + ATP = (R)-4'-phosphopantothenate + ADP + H(+). The protein operates within cofactor biosynthesis; coenzyme A biosynthesis; CoA from (R)-pantothenate: step 1/5. Catalyzes the phosphorylation of pantothenate (Pan), the first step in CoA biosynthesis. The sequence is that of Type III pantothenate kinase from Helicobacter pylori (strain HPAG1).